We begin with the raw amino-acid sequence, 320 residues long: Quinolinate synthase (320 aa).

Residues His-34 and Ser-51 each coordinate iminosuccinate. Cys-96 contributes to the [4Fe-4S] cluster binding site. Residues 122–124 and Ser-139 contribute to the iminosuccinate site; that span reads YIN. Residue Cys-182 coordinates [4Fe-4S] cluster. Residues 208–210 and Thr-225 contribute to the iminosuccinate site; that span reads HPE. Residue Cys-276 participates in [4Fe-4S] cluster binding.

Belongs to the quinolinate synthase family. Type 2 subfamily. [4Fe-4S] cluster serves as cofactor.

It is found in the cytoplasm. It carries out the reaction iminosuccinate + dihydroxyacetone phosphate = quinolinate + phosphate + 2 H2O + H(+). It participates in cofactor biosynthesis; NAD(+) biosynthesis; quinolinate from iminoaspartate: step 1/1. Functionally, catalyzes the condensation of iminoaspartate with dihydroxyacetone phosphate to form quinolinate. The protein is Quinolinate synthase of Synechococcus sp. (strain ATCC 27144 / PCC 6301 / SAUG 1402/1) (Anacystis nidulans).